Consider the following 576-residue polypeptide: Septation ring formation regulator EzrA (576 aa).

Over 1–7 (MSSTVII) the chain is Extracellular. Residues 8 to 26 (LIVVLLVILVAFYAFAILM) traverse the membrane as a helical segment. Residues 27-576 (RKKTEDRILA…FKNKPTPDYL (550 aa)) are Cytoplasmic-facing. 2 coiled-coil regions span residues 105 to 134 (RARE…VAQL) and 277 to 301 (EQFE…LYAI).

Belongs to the EzrA family.

The protein localises to the cell membrane. Functionally, negative regulator of FtsZ ring formation; modulates the frequency and position of FtsZ ring formation. Inhibits FtsZ ring formation at polar sites. Interacts either with FtsZ or with one of its binding partners to promote depolymerization. The polypeptide is Septation ring formation regulator EzrA (Lactococcus lactis subsp. lactis (strain IL1403) (Streptococcus lactis)).